The sequence spans 78 residues: Transmembrane protein 258 (78 aa).

The Cytoplasmic segment spans residues 1 to 18 (MDVMQRYVSPVNPAVFPH). The chain crosses the membrane as a helical span at residues 19 to 39 (LATVLLVIGTFFTAWFFIFVV). Residues 40 to 53 (SRKSSKESTLIKEL) are Cytoplasmic-facing. Residues 54–74 (LISLCASIFLGFGIVFLLLTV) traverse the membrane as a helical segment. The Perinuclear space segment spans residues 75–78 (GIYV).

The protein belongs to the OST5 family. As to quaternary structure, homodimer. Component of the oligosaccharyltransferase (OST) complex. Interacts with klar and Msp300, components of LINC complex.

Its subcellular location is the nucleus outer membrane. The protein resides in the cytoplasm. The protein localises to the endoplasmic reticulum membrane. Its function is as follows. Subunit of the oligosaccharyl transferase (OST) complex that catalyzes the initial transfer of a defined glycan (Glc(3)Man(9)GlcNAc(2) in eukaryotes) from the lipid carrier dolichol-pyrophosphate to an asparagine residue within an Asn-X-Ser/Thr consensus motif in nascent polypeptide chains, the first step in protein N-glycosylation. N-glycosylation occurs cotranslationally and the complex associates with the Sec61 complex at the channel-forming translocon complex that mediates protein translocation across the endoplasmic reticulum (ER). All subunits are required for a maximal enzyme activity. In addition may regulates nuclear envelope (NE) architecture and nuclear positioning through the linker of nucleoskeleton and cytoskeleton (LINC)-dependent and -independent mechanisms. The protein is Transmembrane protein 258 of Drosophila melanogaster (Fruit fly).